Consider the following 237-residue polypeptide: Purine nucleoside phosphorylase DeoD-type (237 aa).

Residue histidine 4 participates in a purine D-ribonucleoside binding. Phosphate contacts are provided by residues glycine 20, arginine 24, arginine 43, and 87-90 (RVGT). A purine D-ribonucleoside contacts are provided by residues 179–181 (EME) and 203–204 (SD). Residue aspartate 204 is the Proton donor of the active site.

Belongs to the PNP/UDP phosphorylase family. As to quaternary structure, homohexamer; trimer of homodimers.

It carries out the reaction a purine D-ribonucleoside + phosphate = a purine nucleobase + alpha-D-ribose 1-phosphate. The catalysed reaction is a purine 2'-deoxy-D-ribonucleoside + phosphate = a purine nucleobase + 2-deoxy-alpha-D-ribose 1-phosphate. In terms of biological role, catalyzes the reversible phosphorolytic breakdown of the N-glycosidic bond in the beta-(deoxy)ribonucleoside molecules, with the formation of the corresponding free purine bases and pentose-1-phosphate. In Streptococcus gordonii (strain Challis / ATCC 35105 / BCRC 15272 / CH1 / DL1 / V288), this protein is Purine nucleoside phosphorylase DeoD-type.